The following is a 250-amino-acid chain: uncharacterized protein (250 aa).

Residue K17 forms a Glycyl lysine isopeptide (Lys-Gly) (interchain with G-Cter in ubiquitin) linkage. The tract at residues 30–67 (REEDYVATSKDNIHHHPCDWSAKPSQRQNENEQKSTIR) is disordered.

This is an uncharacterized protein from Saccharomyces cerevisiae (strain ATCC 204508 / S288c) (Baker's yeast).